Here is a 127-residue protein sequence, read N- to C-terminus: Small ribosomal subunit protein uS11 (127 aa).

It belongs to the universal ribosomal protein uS11 family. As to quaternary structure, part of the 30S ribosomal subunit. Interacts with proteins S7 and S18. Binds to IF-3.

In terms of biological role, located on the platform of the 30S subunit, it bridges several disparate RNA helices of the 16S rRNA. Forms part of the Shine-Dalgarno cleft in the 70S ribosome. In Streptococcus thermophilus (strain CNRZ 1066), this protein is Small ribosomal subunit protein uS11.